Reading from the N-terminus, the 235-residue chain is Lipoprotein signal peptidase (235 aa).

Positions 1 to 23 (MTDETSGPAEPVTDAPGDAESPA) are disordered. The next 3 membrane-spanning stretches (helical) occupy residues 31 to 51 (LLLTVAAVVLFLDVVTKVLAV), 84 to 104 (GYTWVLTLVATGVVIGIIWMG), and 108 to 128 (VSPWWALGLGLILGGATGNLV). Catalysis depends on residues Asp144 and Asp158. Residues 156–176 (VADPSVVGGAILLVALSLFGF) traverse the membrane as a helical segment. Positions 185 to 235 (RPGEDAEPSAGASDSTPEAPAADGPDKPAGPVGPEDAAEESKTVGHQAEPS) are disordered. Low complexity predominate over residues 201-218 (PEAPAADGPDKPAGPVGP).

This sequence belongs to the peptidase A8 family.

The protein localises to the cell membrane. The catalysed reaction is Release of signal peptides from bacterial membrane prolipoproteins. Hydrolyzes -Xaa-Yaa-Zaa-|-(S,diacylglyceryl)Cys-, in which Xaa is hydrophobic (preferably Leu), and Yaa (Ala or Ser) and Zaa (Gly or Ala) have small, neutral side chains.. It participates in protein modification; lipoprotein biosynthesis (signal peptide cleavage). This protein specifically catalyzes the removal of signal peptides from prolipoproteins. In Mycolicibacterium smegmatis (strain ATCC 700084 / mc(2)155) (Mycobacterium smegmatis), this protein is Lipoprotein signal peptidase.